The primary structure comprises 254 residues: Pyrroloquinoline-quinone synthase (254 aa).

The protein belongs to the PqqC family.

It catalyses the reaction 6-(2-amino-2-carboxyethyl)-7,8-dioxo-1,2,3,4,7,8-hexahydroquinoline-2,4-dicarboxylate + 3 O2 = pyrroloquinoline quinone + 2 H2O2 + 2 H2O + H(+). Its pathway is cofactor biosynthesis; pyrroloquinoline quinone biosynthesis. Ring cyclization and eight-electron oxidation of 3a-(2-amino-2-carboxyethyl)-4,5-dioxo-4,5,6,7,8,9-hexahydroquinoline-7,9-dicarboxylic-acid to PQQ. This chain is Pyrroloquinoline-quinone synthase, found in Rhodopseudomonas palustris (strain TIE-1).